The following is a 116-amino-acid chain: Pancreatic progenitor cell differentiation and proliferation factor (116 aa).

Serine 9 bears the Phosphoserine mark. Disordered regions lie at residues 22–47 (GSTS…PGLP) and 92–116 (LAQK…PRPE). The segment covering 23 to 32 (STSSNSSCGS) has biased composition (low complexity).

Belongs to the PPDPF family.

Functionally, probable regulator of exocrine pancreas development. The chain is Pancreatic progenitor cell differentiation and proliferation factor (PPDPF) from Bos taurus (Bovine).